A 154-amino-acid chain; its full sequence is 6,7-dimethyl-8-ribityllumazine synthase (154 aa).

Residues phenylalanine 23, 57–59 (AFE), and 81–83 (AVI) each bind 5-amino-6-(D-ribitylamino)uracil. 86–87 (ST) serves as a coordination point for (2S)-2-hydroxy-3-oxobutyl phosphate. The active-site Proton donor is the histidine 89. Phenylalanine 114 lines the 5-amino-6-(D-ribitylamino)uracil pocket. Residue arginine 128 participates in (2S)-2-hydroxy-3-oxobutyl phosphate binding.

This sequence belongs to the DMRL synthase family.

The enzyme catalyses (2S)-2-hydroxy-3-oxobutyl phosphate + 5-amino-6-(D-ribitylamino)uracil = 6,7-dimethyl-8-(1-D-ribityl)lumazine + phosphate + 2 H2O + H(+). Its pathway is cofactor biosynthesis; riboflavin biosynthesis; riboflavin from 2-hydroxy-3-oxobutyl phosphate and 5-amino-6-(D-ribitylamino)uracil: step 1/2. Its function is as follows. Catalyzes the formation of 6,7-dimethyl-8-ribityllumazine by condensation of 5-amino-6-(D-ribitylamino)uracil with 3,4-dihydroxy-2-butanone 4-phosphate. This is the penultimate step in the biosynthesis of riboflavin. In Campylobacter jejuni subsp. doylei (strain ATCC BAA-1458 / RM4099 / 269.97), this protein is 6,7-dimethyl-8-ribityllumazine synthase.